The primary structure comprises 1040 residues: Multidrug resistance protein MdtB (1040 aa).

Helical transmembrane passes span 16-36 (FIMR…AGII), 347-367 (LMMA…NIPA), 369-389 (IIPG…MVFL), 396-416 (LTLM…IVVI), 440-460 (IGFT…PLLF), 472-492 (FAIT…TLTP), 537-557 (WLTL…WVFI), 863-883 (LGST…VLGI), 888-908 (FIHP…ALLA), 911-931 (IAGS…IGIV), 968-988 (ILMT…STGV), and 998-1018 (IGMV…TPVI).

Belongs to the resistance-nodulation-cell division (RND) (TC 2.A.6) family. MdtB subfamily. In terms of assembly, part of a tripartite efflux system composed of MdtA, MdtB and MdtC. MdtB forms a heteromultimer with MdtC.

The protein resides in the cell inner membrane. The MdtABC tripartite complex confers resistance against novobiocin and deoxycholate. This chain is Multidrug resistance protein MdtB, found in Escherichia coli O7:K1 (strain IAI39 / ExPEC).